Consider the following 667-residue polypeptide: Heat shock protein DDB_G0283913 (667 aa).

The next 2 helical transmembrane spans lie at 2–22 (FVGT…KKIL) and 224–244 (MFIC…LNEL). Residues 18–82 (IKKILKRKKE…ELAKKLNCYI (65 aa)) are a coiled coil. Residues 432 to 478 (IDDTIQDNDKSGSEVSTPTISSSSSSPLQPIIKDEKDDNIENKSDEA) form a disordered region. Residues 444 to 457 (SEVSTPTISSSSSS) are compositionally biased toward low complexity. Positions 463–477 (IKDEKDDNIENKSDE) are enriched in basic and acidic residues. The region spanning 551 to 667 (MVFSSGFKPF…VITFKFEKIG (117 aa)) is the sHSP domain.

It belongs to the small heat shock protein (HSP20) family.

It is found in the membrane. In Dictyostelium discoideum (Social amoeba), this protein is Heat shock protein DDB_G0283913.